The chain runs to 327 residues: tRNA uridine(34) hydroxylase (327 aa).

The Rhodanese domain maps to 123 to 217; sequence SDPEVLLVDT…YLEEVKQEES (95 aa). The active-site Cysteine persulfide intermediate is the Cys177.

It belongs to the TrhO family.

The enzyme catalyses uridine(34) in tRNA + AH2 + O2 = 5-hydroxyuridine(34) in tRNA + A + H2O. Functionally, catalyzes oxygen-dependent 5-hydroxyuridine (ho5U) modification at position 34 in tRNAs. The sequence is that of tRNA uridine(34) hydroxylase from Shewanella piezotolerans (strain WP3 / JCM 13877).